Reading from the N-terminus, the 405-residue chain is uncharacterized protein (405 aa).

Positions 1 to 20 are cleaved as a signal peptide; the sequence is MKAKLALSIIGLVLASLVAG. An N-acetylcysteine modification is found at Cys21. Cys21 carries S-archaeol cysteine lipidation.

Belongs to the BMP lipoprotein family.

Its subcellular location is the cell membrane. This is an uncharacterized protein from Pyrococcus horikoshii (strain ATCC 700860 / DSM 12428 / JCM 9974 / NBRC 100139 / OT-3).